The following is a 191-amino-acid chain: Cytochrome c biogenesis ATP-binding export protein CcmA (191 aa).

An ABC transporter domain is found at 2–190; it reads LSLHQLQFKN…SIKSAQILRI (189 aa). 29–36 lines the ATP pocket; it reads GANGCGKS.

It belongs to the ABC transporter superfamily. CcmA exporter (TC 3.A.1.107) family. In terms of assembly, the complex is composed of two ATP-binding proteins (CcmA) and two transmembrane proteins (CcmB).

The protein resides in the cell inner membrane. It catalyses the reaction heme b(in) + ATP + H2O = heme b(out) + ADP + phosphate + H(+). Part of the ABC transporter complex CcmAB involved in the biogenesis of c-type cytochromes; once thought to export heme, this seems not to be the case, but its exact role is uncertain. Responsible for energy coupling to the transport system. The polypeptide is Cytochrome c biogenesis ATP-binding export protein CcmA (Rickettsia conorii (strain ATCC VR-613 / Malish 7)).